The primary structure comprises 1406 residues: MSEIQGTVEFSVELHKFYNVDLFQRGYYQIRVTLKVSSRIPHRLSASIAGQTESSSLHSACVHDSTVHSRVFQILYRNEEVPINDAVVFRVHLLLGGERMEDALSEVDFQLKVDLHFTDSEQQLRDVAGAPMVSSRTLGLHFHPRNGLHHQVPVMFDYFHLSVISVTVHAALVALQQPLISFTRPGRGSWLGKGGPDTGQEQSIISLENLVFGAGYCKPTSSEGSFYITSENCMQHAHKWHRDLCLLLLHAYRGLRLHFLVIMRDIPELPHTELEALAVEETLSQLCSELQMLNNPEKIAEQISKDLAWLTSHMMTLWTQFLDTVTLHSQVTTYLTQEHHTLRVRRFSEAFFYMEHQKLAVLTFQENLIQTHSQLSLDIRNSEYLTSMPPLPAECLDIDGDWNTLPVIFEDRYVDCPATGHNLSVYPNFDVPVTSPTIMNLKDKEDNCMVNSNLSFREDLVLSTIKPSQMDSDEEVIRCPEPGENVATQNHMDMCSESQVYISIGEFQNKAGVPEDECWTGQTSDAGTYPVADVDTSRRSPGPEDGQAPVLTYIDVKSSNKNPSRAEPLVAFNAQHESRSSRDKYGLDRTGLSKVVVGGSHQNAISSDKTTLHELSTLGKGIDQEGKMVLLSLKLTPSEPCDPLSSTLREPLDIRSSLKDSHTEEQEELSVLSGVIKRSSSIISDSGIESEPSSVAWSEARSRALELPSDREVLHPFVRRHALHRNSLEGGHTESNTSLPSGIQASLTSISSLPFEEDEREVALTKLTKSVSAPHISSPEEAAEDADTKQQDGGFAEPSDMHSKSQGSPGSCSQLCGDSGTDAGADHPLVEIVLDADNQQGPGYIDIPKGKGKQFDAQGHCLPDGRTENTPGVETKGLNLKIPRVIALENPRTRSLHRALEETPKGMPKDLNVGQQALSNSGISEVEGLSQHQVPELSCTSAADAINRNSTGQQSQSGSPCIMDDTAFNRGVNAFPEAKHKAGTVCPTVTHSVHSQVLKNQELKAGTSIMGSHLTSAETFTLDSLKAVEVVNLSVSCTATCLPFSSVPKETPARAGFSSKQTLFPITHQPLGSFGVVSTHSSTLDEEVSERMFSFYQAKEKFKKELKIEGFLYSDLTVLASDIPYFPPEEEEENLEDGIHLVVCVHGLDGNSADLRLVKTFIELGLPGGKLDFLMSEKNQMDTFADFDTMTDRLLDEIIQHIQLYNLSISRISFIGHSLGNIIIRSVLTRPRFRYYLNKLHTFLSLSGPHLGTLYNNSTLVSTGLWLMQKLKKSGSLLQLTFRDNADLRKCFLYQLSQKTGLQYFKNVVLVASPQDRYVPFHSARIEMCKTALKDRHTGPVYAEMINNLLGPLVEAKDCTLIRHNVFHALPNTANTLIGRAAHIAVLDSELFLEKFFLVAGLNYFK.

2 disordered regions span residues 519-548 and 770-820; these read WTGQ…DGQA and SVSA…GDSG. S777 and S778 each carry phosphoserine. Residues 804–816 show a composition bias toward polar residues; the sequence is KSQGSPGSCSQLC.

The protein belongs to the FAM135 family.

The protein is Protein FAM135B (FAM135B) of Homo sapiens (Human).